Consider the following 359-residue polypeptide: tRNA-specific 2-thiouridylase MnmA (359 aa).

ATP is bound by residues 7–14 and Met-33; that span reads AMSGGVDS. Catalysis depends on Cys-101, which acts as the Nucleophile. A disulfide bridge links Cys-101 with Cys-198. Gly-125 is a binding site for ATP. The interaction with tRNA stretch occupies residues 148–150; sequence KDQ. Catalysis depends on Cys-198, which acts as the Cysteine persulfide intermediate.

It belongs to the MnmA/TRMU family.

Its subcellular location is the cytoplasm. The catalysed reaction is S-sulfanyl-L-cysteinyl-[protein] + uridine(34) in tRNA + AH2 + ATP = 2-thiouridine(34) in tRNA + L-cysteinyl-[protein] + A + AMP + diphosphate + H(+). Catalyzes the 2-thiolation of uridine at the wobble position (U34) of tRNA, leading to the formation of s(2)U34. The chain is tRNA-specific 2-thiouridylase MnmA from Chloroflexus aurantiacus (strain ATCC 29366 / DSM 635 / J-10-fl).